The following is a 126-amino-acid chain: uncharacterized protein (126 aa).

This is an uncharacterized protein from Methanocaldococcus jannaschii (strain ATCC 43067 / DSM 2661 / JAL-1 / JCM 10045 / NBRC 100440) (Methanococcus jannaschii).